Consider the following 23-residue polypeptide: Chaperonin GroEL (23 aa).

Belongs to the chaperonin (HSP60) family. In terms of assembly, forms a cylinder of 14 subunits composed of two heptameric rings stacked back-to-back. Interacts with the co-chaperonin GroES. Phosphorylated on threonine.

Its subcellular location is the cytoplasm. The catalysed reaction is ATP + H2O + a folded polypeptide = ADP + phosphate + an unfolded polypeptide.. Functionally, together with its co-chaperonin GroES, plays an essential role in assisting protein folding. The GroEL-GroES system forms a nano-cage that allows encapsulation of the non-native substrate proteins and provides a physical environment optimized to promote and accelerate protein folding. The polypeptide is Chaperonin GroEL (Acidithiobacillus ferrooxidans (Thiobacillus ferrooxidans)).